A 377-amino-acid chain; its full sequence is Tryptophan 2,3-dioxygenase (377 aa).

Substrate is bound by residues 57-61 and R128; that span reads FIITH. Heme is bound at residue H313. Substrate is bound at residue T328.

The protein belongs to the tryptophan 2,3-dioxygenase family. As to quaternary structure, homotetramer. Dimer of dimers. It depends on heme as a cofactor.

The enzyme catalyses L-tryptophan + O2 = N-formyl-L-kynurenine. Its pathway is amino-acid degradation; L-tryptophan degradation via kynurenine pathway; L-kynurenine from L-tryptophan: step 1/2. The protein operates within pigment biosynthesis; ommochrome biosynthesis. Functionally, heme-dependent dioxygenase that catalyzes the oxidative cleavage of the L-tryptophan (L-Trp) pyrrole ring and converts L-tryptophan to N-formyl-L-kynurenine. Catalyzes the oxidative cleavage of the indole moiety. The polypeptide is Tryptophan 2,3-dioxygenase (Drosophila grimshawi (Hawaiian fruit fly)).